The chain runs to 293 residues: Probable aspartoacylase (293 aa).

Residues H14 and E17 each contribute to the Zn(2+) site. Residues R56 and 63–64 (NR) each bind substrate. Zn(2+) is bound at residue H106. Substrate contacts are provided by E165 and Y276.

Belongs to the AspA/AstE family. Aspartoacylase subfamily. Requires Zn(2+) as cofactor.

The enzyme catalyses an N-acyl-L-aspartate + H2O = a carboxylate + L-aspartate. This chain is Probable aspartoacylase, found in Trichodesmium erythraeum (strain IMS101).